A 78-amino-acid chain; its full sequence is Putative membrane protein insertion efficiency factor (78 aa).

This sequence belongs to the UPF0161 family.

It is found in the cell membrane. Functionally, could be involved in insertion of integral membrane proteins into the membrane. The protein is Putative membrane protein insertion efficiency factor of Bacillus anthracis (strain A0248).